A 599-amino-acid chain; its full sequence is Elongation factor 4 (599 aa).

One can recognise a tr-type G domain in the interval 4–186 (EHIRNFSIIA…EIVKKIPPPQ (183 aa)). Residues 16 to 21 (DHGKST) and 133 to 136 (NKID) contribute to the GTP site.

This sequence belongs to the TRAFAC class translation factor GTPase superfamily. Classic translation factor GTPase family. LepA subfamily.

It localises to the cell inner membrane. The enzyme catalyses GTP + H2O = GDP + phosphate + H(+). Required for accurate and efficient protein synthesis under certain stress conditions. May act as a fidelity factor of the translation reaction, by catalyzing a one-codon backward translocation of tRNAs on improperly translocated ribosomes. Back-translocation proceeds from a post-translocation (POST) complex to a pre-translocation (PRE) complex, thus giving elongation factor G a second chance to translocate the tRNAs correctly. Binds to ribosomes in a GTP-dependent manner. This chain is Elongation factor 4, found in Geobacter sp. (strain M21).